The sequence spans 109 residues: uncharacterized protein (109 aa).

The helical transmembrane segment at 78 to 98 (YTCIMYIGLLCMFVLLYMTVI) threads the bilayer.

It localises to the membrane. This is an uncharacterized protein from Saccharomyces cerevisiae (strain ATCC 204508 / S288c) (Baker's yeast).